Consider the following 215-residue polypeptide: UPF0173 metal-dependent hydrolase NEQ378 (215 aa).

This sequence belongs to the UPF0173 family.

In Nanoarchaeum equitans (strain Kin4-M), this protein is UPF0173 metal-dependent hydrolase NEQ378.